Reading from the N-terminus, the 93-residue chain is Acylphosphatase (93 aa).

The region spanning 6–93 (RAHVFISGRV…GEERGFSIIW (88 aa)) is the Acylphosphatase-like domain. Catalysis depends on residues Arg-21 and Asn-39.

The protein belongs to the acylphosphatase family.

The enzyme catalyses an acyl phosphate + H2O = a carboxylate + phosphate + H(+). This is Acylphosphatase (acyP) from Roseiflexus sp. (strain RS-1).